A 70-amino-acid polypeptide reads, in one-letter code: Large ribosomal subunit protein uL29 (70 aa).

Belongs to the universal ribosomal protein uL29 family.

In Symbiobacterium thermophilum (strain DSM 24528 / JCM 14929 / IAM 14863 / T), this protein is Large ribosomal subunit protein uL29.